The primary structure comprises 265 residues: Ubiquinone biosynthesis protein COQ4 homolog, mitochondrial (265 aa).

Residues 1-30 (MMQRSWQSWRRGLTLGLASRRSYVASVEAP) constitute a mitochondrion transit peptide. The Zn(2+) site is built by His170, Asp171, His174, and Glu186.

The protein belongs to the COQ4 family. As to quaternary structure, component of a multi-subunit COQ enzyme complex. Requires Zn(2+) as cofactor.

The protein resides in the mitochondrion inner membrane. The enzyme catalyses a 4-hydroxy-3-methoxy-5-(all-trans-polyprenyl)benzoate + H(+) = a 2-methoxy-6-(all-trans-polyprenyl)phenol + CO2. It functions in the pathway cofactor biosynthesis; ubiquinone biosynthesis. Functionally, lyase that catalyzes the C1-decarboxylation of 4-hydroxy-3-methoxy-5-(all-trans-polyprenyl)benzoic acid into 2-methoxy-6-(all-trans-polyprenyl)phenol during ubiquinone biosynthesis. This is Ubiquinone biosynthesis protein COQ4 homolog, mitochondrial from Drosophila virilis (Fruit fly).